The primary structure comprises 865 residues: DNA-directed RNA polymerase subunit Rpo1N (865 aa).

Residues Cys60, Cys63, Cys70, His73, Cys100, Cys103, Cys146, and Cys149 each coordinate Zn(2+). Residues Asp451, Asp453, and Asp455 each contribute to the Mg(2+) site. The interval 500-531 (EHTSSQGKRLFSVRSRPPDPQEGRAPPPDREG) is disordered. Basic and acidic residues predominate over residues 515-531 (RPPDPQEGRAPPPDREG).

Belongs to the RNA polymerase beta' chain family. In terms of assembly, part of the RNA polymerase complex. It depends on Mg(2+) as a cofactor. Requires Zn(2+) as cofactor.

Its subcellular location is the cytoplasm. The catalysed reaction is RNA(n) + a ribonucleoside 5'-triphosphate = RNA(n+1) + diphosphate. Its function is as follows. DNA-dependent RNA polymerase (RNAP) catalyzes the transcription of DNA into RNA using the four ribonucleoside triphosphates as substrates. Forms the clamp head domain. This chain is DNA-directed RNA polymerase subunit Rpo1N, found in Methanothermobacter thermautotrophicus (strain Winter) (Methanobacterium thermoautotrophicum).